The sequence spans 229 residues: 2-C-methyl-D-erythritol 4-phosphate cytidylyltransferase (229 aa).

It belongs to the IspD/TarI cytidylyltransferase family. IspD subfamily.

The enzyme catalyses 2-C-methyl-D-erythritol 4-phosphate + CTP + H(+) = 4-CDP-2-C-methyl-D-erythritol + diphosphate. The protein operates within isoprenoid biosynthesis; isopentenyl diphosphate biosynthesis via DXP pathway; isopentenyl diphosphate from 1-deoxy-D-xylulose 5-phosphate: step 2/6. Functionally, catalyzes the formation of 4-diphosphocytidyl-2-C-methyl-D-erythritol from CTP and 2-C-methyl-D-erythritol 4-phosphate (MEP). The protein is 2-C-methyl-D-erythritol 4-phosphate cytidylyltransferase of Neisseria gonorrhoeae (strain ATCC 700825 / FA 1090).